A 188-amino-acid chain; its full sequence is MPSPVATVETDSLQQPILGSRRPSNYFWAIAVSVGGTGLLLAGLSSYLQVNLLPFSEPTRLAFLPQGLVMGLYGIAAILLASYLWFVISLDVGGGYNAFDRKTQKATIFRWGFPGKNRRVEITYPLSDIQAVRVDIKEGLNPKRALYLKVKGRGDVPLTRVGQPLPLTELESQGAELARFLAVPLEGL.

The next 2 helical transmembrane spans lie at 26 to 46 and 68 to 88; these read YFWA…GLSS and LVMG…WFVI.

It belongs to the Ycf4 family.

The protein localises to the cellular thylakoid membrane. In terms of biological role, seems to be required for the assembly of the photosystem I complex. In Synechococcus elongatus (strain ATCC 33912 / PCC 7942 / FACHB-805) (Anacystis nidulans R2), this protein is Photosystem I assembly protein Ycf4.